The following is a 118-amino-acid chain: Non-specific lipid-transfer protein (118 aa).

Positions 1 to 25 (MDCIRILWSVAVGLLLVSWRPTMFA) are cleaved as a signal peptide. 4 disulfides stabilise this stretch: cysteine 30–cysteine 76, cysteine 40–cysteine 53, cysteine 54–cysteine 98, and cysteine 74–cysteine 113.

It belongs to the plant LTP family.

In terms of biological role, plant non-specific lipid-transfer proteins transfer phospholipids as well as galactolipids across membranes. May play a role in wax or cutin deposition in the cell walls of expanding epidermal cells and certain secretory tissues. The polypeptide is Non-specific lipid-transfer protein (Ambrosia artemisiifolia (Common ragweed)).